The sequence spans 284 residues: uncharacterized protein (284 aa).

A disordered region spans residues 236-284 (IDITNEADSSEIIDSEPSNKDETEKPSAQETDPFDGKPVDIKDDELPFD). 2 stretches are compositionally biased toward basic and acidic residues: residues 252 to 262 (PSNKDETEKPS) and 269 to 284 (FDGK…LPFD).

This is an uncharacterized protein from Bacillus subtilis (strain 168).